The chain runs to 819 residues: Probable phosphoenolpyruvate synthase (819 aa).

The active-site Tele-phosphohistidine intermediate is the H441. Residues R540, R587, E684, G706, T707, N708, and D709 each contribute to the substrate site. E684 contacts Mg(2+). Mg(2+) is bound at residue D709. Residue C756 is the Proton donor of the active site.

Belongs to the PEP-utilizing enzyme family. It depends on Mg(2+) as a cofactor.

It catalyses the reaction pyruvate + ATP + H2O = phosphoenolpyruvate + AMP + phosphate + 2 H(+). It participates in carbohydrate biosynthesis; gluconeogenesis. Functionally, catalyzes the phosphorylation of pyruvate to phosphoenolpyruvate. In Pyrococcus abyssi (strain GE5 / Orsay), this protein is Probable phosphoenolpyruvate synthase (ppsA).